The primary structure comprises 256 residues: Small ribosomal subunit protein uS2 (256 aa).

The interval 229–256 (PVDDNGDYGDFDEAIDEYADETDASESE) is disordered. Positions 232-256 (DNGDYGDFDEAIDEYADETDASESE) are enriched in acidic residues.

Belongs to the universal ribosomal protein uS2 family.

The polypeptide is Small ribosomal subunit protein uS2 (Picosynechococcus sp. (strain ATCC 27264 / PCC 7002 / PR-6) (Agmenellum quadruplicatum)).